The chain runs to 1939 residues: Myosin-1 (1939 aa).

In terms of domain architecture, Myosin N-terminal SH3-like spans 33–82 (DAKTSVFVVDPKESFVKATVQSREGGKVTAKTEAGATVTVKDDQVFPMNP). A phosphothreonine mark is found at Thr64 and Thr69. The region spanning 86 to 782 (DKIEDMAMMT…LLGLLEEMRD (697 aa)) is the Myosin motor domain. Lys130 carries the post-translational modification N6,N6,N6-trimethyllysine. ATP is bound at residue 179–186 (GESGAGKT). Tyr389 bears the Phosphotyrosine mark. Phosphothreonine is present on Thr419. Tyr424 bears the Phosphotyrosine mark. The interval 659–681 (LNKLMTNLRSTHPHFVRCIIPNE) is actin-binding. At His757 the chain carries Pros-methylhistidine. The interval 761 to 775 (KFGHTKVFFKAGLLG) is actin-binding. Residues 785 to 814 (LAQLITRTQAMCRGFLARVEYQKMVERRES) form the IQ domain. A coiled-coil region spans residues 843-1939 (LLKSAETEKE…EVHTKIISEE (1097 aa)). Phosphoserine is present on residues Ser1092, Ser1096, Ser1162, and Ser1237. Phosphothreonine is present on Thr1241. Ser1243 and Ser1261 each carry phosphoserine. A phosphothreonine mark is found at Thr1265 and Thr1286. Phosphoserine is present on residues Ser1288, Ser1292, Ser1303, and Ser1306. Position 1467 is a phosphothreonine (Thr1467). The residue at position 1474 (Ser1474) is a Phosphoserine. Position 1492 is a phosphotyrosine (Tyr1492). Ser1495 is modified (phosphoserine). Thr1501 carries the phosphothreonine modification. Ser1514 carries the phosphoserine modification. Residue Thr1517 is modified to Phosphothreonine. Phosphoserine is present on residues Ser1542, Ser1554, Ser1574, Ser1600, Ser1603, Ser1714, and Ser1726. 2 positions are modified to phosphothreonine: Thr1730 and Thr1736. Phosphoserine is present on Ser1739.

It belongs to the TRAFAC class myosin-kinesin ATPase superfamily. Myosin family. In terms of assembly, muscle myosin is a hexameric protein that consists of 2 heavy chain subunits (MHC), 2 alkali light chain subunits (MLC) and 2 regulatory light chain subunits (MLC-2). Interacts with SLC26A5.

It localises to the cytoplasm. The protein localises to the myofibril. Its function is as follows. Required for normal hearing. It plays a role in cochlear amplification of auditory stimuli, likely through the positive regulation of prestin (SLC26A5) activity and outer hair cell (OHC) electromotility. In Homo sapiens (Human), this protein is Myosin-1.